The sequence spans 209 residues: Glutathione S-transferase 2 (209 aa).

Residues Met1–Asp81 enclose the GST N-terminal domain. Residues Ser10, Arg51–Ile53, and Glu65–Arg67 each bind glutathione. A GST C-terminal domain is found at Asp88 to Lys209.

This sequence belongs to the GST superfamily. Theta family. In terms of assembly, homodimer.

The enzyme catalyses RX + glutathione = an S-substituted glutathione + a halide anion + H(+). Its function is as follows. Conjugation of reduced glutathione to a wide number of exogenous and endogenous hydrophobic electrophiles. In Anopheles gambiae (African malaria mosquito), this protein is Glutathione S-transferase 2 (GstD2).